Here is a 604-residue protein sequence, read N- to C-terminus: Sulfite reductase [NADPH] flavoprotein alpha-component (604 aa).

The Flavodoxin-like domain maps to V66–A204. FMN-binding positions include S72–A77, S119–G122, and L155–C164. The 215-residue stretch at A239–P453 folds into the FAD-binding FR-type domain. FAD is bound by residues T327, Q361, R391–S394, T409–G411, and G424–S427. NADP(+) contacts are provided by residues S524–R525, K530–Q534, and D566. Position 604 (Y604) interacts with FAD.

This sequence belongs to the NADPH-dependent sulphite reductase flavoprotein subunit CysJ family. It in the N-terminal section; belongs to the flavodoxin family. In the C-terminal section; belongs to the flavoprotein pyridine nucleotide cytochrome reductase family. In terms of assembly, alpha(8)-beta(8). The alpha component is a flavoprotein, the beta component is a hemoprotein. Requires FAD as cofactor. FMN is required as a cofactor.

It catalyses the reaction hydrogen sulfide + 3 NADP(+) + 3 H2O = sulfite + 3 NADPH + 4 H(+). Its pathway is sulfur metabolism; hydrogen sulfide biosynthesis; hydrogen sulfide from sulfite (NADPH route): step 1/1. Its function is as follows. Component of the sulfite reductase complex that catalyzes the 6-electron reduction of sulfite to sulfide. This is one of several activities required for the biosynthesis of L-cysteine from sulfate. The flavoprotein component catalyzes the electron flow from NADPH -&gt; FAD -&gt; FMN to the hemoprotein component. This is Sulfite reductase [NADPH] flavoprotein alpha-component from Neisseria meningitidis serogroup B (strain ATCC BAA-335 / MC58).